The chain runs to 202 residues: Imidazoleglycerol-phosphate dehydratase (202 aa).

This sequence belongs to the imidazoleglycerol-phosphate dehydratase family.

It localises to the cytoplasm. The enzyme catalyses D-erythro-1-(imidazol-4-yl)glycerol 3-phosphate = 3-(imidazol-4-yl)-2-oxopropyl phosphate + H2O. It participates in amino-acid biosynthesis; L-histidine biosynthesis; L-histidine from 5-phospho-alpha-D-ribose 1-diphosphate: step 6/9. The chain is Imidazoleglycerol-phosphate dehydratase from Mycolicibacterium gilvum (strain PYR-GCK) (Mycobacterium gilvum (strain PYR-GCK)).